The primary structure comprises 336 residues: Peroxidase 72 (336 aa).

Positions 1 to 23 are cleaved as a signal peptide; that stretch reads MAKSLNILIAALSLIAFSPFCLC. Disulfide bonds link cysteine 42/cysteine 122, cysteine 75/cysteine 80, cysteine 128/cysteine 329, and cysteine 207/cysteine 239. Histidine 73 acts as the Proton acceptor in catalysis. Aspartate 74, valine 77, glycine 79, aspartate 81, and serine 83 together coordinate Ca(2+). A substrate-binding site is contributed by proline 170. The N-linked (GlcNAc...) asparagine glycan is linked to asparagine 173. Histidine 200 lines the heme b pocket. Residue threonine 201 participates in Ca(2+) binding. N-linked (GlcNAc...) asparagine glycosylation is present at asparagine 216. The Ca(2+) site is built by aspartate 252, threonine 255, and aspartate 260.

This sequence belongs to the peroxidase family. Classical plant (class III) peroxidase subfamily. Heme b serves as cofactor. Ca(2+) is required as a cofactor. As to expression, slightly expressed in roots.

The protein localises to the secreted. It catalyses the reaction 2 a phenolic donor + H2O2 = 2 a phenolic radical donor + 2 H2O. Functionally, removal of H(2)O(2), oxidation of toxic reductants, biosynthesis and degradation of lignin, suberization, auxin catabolism, response to environmental stresses such as wounding, pathogen attack and oxidative stress. These functions might be dependent on each isozyme/isoform in each plant tissue. The protein is Peroxidase 72 (PER72) of Arabidopsis thaliana (Mouse-ear cress).